Reading from the N-terminus, the 163-residue chain is Large ribosomal subunit protein uL11 (163 aa).

The segment at 1–25 (MAGTIEVLVAGGQADPGPPLGPELG) is disordered.

The protein belongs to the universal ribosomal protein uL11 family. In terms of assembly, part of the ribosomal stalk of the 50S ribosomal subunit. Interacts with L10 and the large rRNA to form the base of the stalk. L10 forms an elongated spine to which L12 dimers bind in a sequential fashion forming a multimeric L10(L12)X complex.

In terms of biological role, forms part of the ribosomal stalk which helps the ribosome interact with GTP-bound translation factors. This Natronomonas pharaonis (strain ATCC 35678 / DSM 2160 / CIP 103997 / JCM 8858 / NBRC 14720 / NCIMB 2260 / Gabara) (Halobacterium pharaonis) protein is Large ribosomal subunit protein uL11.